A 487-amino-acid chain; its full sequence is ESCRT-I complex subunit vps23 (487 aa).

Residues 428 to 487 form the SB domain; that stretch reads SERELKYYELKRKDEKLDEGIRALNQALHHESIMPASWLKGIKLLARQQFLIRDEMLQYS.

Component of the ESCRT-I complex (endosomal sorting complex required for transport I).

The protein resides in the cytoplasm. It is found in the endosome. The protein localises to the late endosome membrane. Functionally, component of the ESCRT-I complex, a regulator of vesicular trafficking process. Binds to ubiquitinated cargo proteins and is required for the sorting of endocytic ubiquitinated cargos into multivesicular bodies (MVBs). Mediates the association to the ESCRT-0 complex. This chain is ESCRT-I complex subunit vps23 (sst6), found in Schizosaccharomyces pombe (strain 972 / ATCC 24843) (Fission yeast).